Reading from the N-terminus, the 212-residue chain is MSLRFVISGTDTGIGKTVFAAALTHALEAHYWKPVQSGLEEETDSQTVARLAGASHARILPEAYRLKTPASPHLSARLDNVSIDPARLLPPRPDGPLVIEGAGGLLVPLTDRLLFADIFALWQIPLILCARTALGTINHTLLSLEALRHRAIPVQGVVFIGDEDRENERVITDIGAVRRLGRLPRLPELTPEALHQAFAQHFNLADFLEVPA.

13–18 (GIGKTV) contributes to the ATP binding site. Thr-17 contributes to the Mg(2+) binding site. Lys-33 is a catalytic residue. Ser-37 provides a ligand contact to substrate. Glu-100 provides a ligand contact to Mg(2+). ATP is bound by residues 100-103 (EGAG) and 184-186 (PRL).

This sequence belongs to the dethiobiotin synthetase family. Homodimer. Mg(2+) is required as a cofactor.

The protein resides in the cytoplasm. The catalysed reaction is (7R,8S)-7,8-diammoniononanoate + CO2 + ATP = (4R,5S)-dethiobiotin + ADP + phosphate + 3 H(+). Its pathway is cofactor biosynthesis; biotin biosynthesis; biotin from 7,8-diaminononanoate: step 1/2. Its function is as follows. Catalyzes a mechanistically unusual reaction, the ATP-dependent insertion of CO2 between the N7 and N8 nitrogen atoms of 7,8-diaminopelargonic acid (DAPA, also called 7,8-diammoniononanoate) to form a ureido ring. This chain is ATP-dependent dethiobiotin synthetase BioD, found in Agrobacterium fabrum (strain C58 / ATCC 33970) (Agrobacterium tumefaciens (strain C58)).